Reading from the N-terminus, the 132-residue chain is Small ribosomal subunit protein uS8c (132 aa).

Belongs to the universal ribosomal protein uS8 family. Part of the 30S ribosomal subunit.

The protein localises to the plastid. It is found in the chloroplast. In terms of biological role, one of the primary rRNA binding proteins, it binds directly to 16S rRNA central domain where it helps coordinate assembly of the platform of the 30S subunit. The sequence is that of Small ribosomal subunit protein uS8c (rps8) from Acorus calamus (Sweet flag).